A 238-amino-acid chain; its full sequence is Ion-translocating oxidoreductase complex subunit E (238 aa).

5 helical membrane passes run Leu41–Val61, Leu71–Ala91, Glu95–Gly115, Ser130–Leu150, and Gly184–Leu204.

It belongs to the NqrDE/RnfAE family. The complex is composed of six subunits: RnfA, RnfB, RnfC, RnfD, RnfE and RnfG.

Its subcellular location is the cell inner membrane. Part of a membrane-bound complex that couples electron transfer with translocation of ions across the membrane. The sequence is that of Ion-translocating oxidoreductase complex subunit E from Pseudomonas aeruginosa (strain LESB58).